A 216-amino-acid chain; its full sequence is Small ribosomal subunit protein uS5 (216 aa).

Residues 1–55 (MDKKLENQKDLLNQDPKVELNSQSVAKNPLNSREVKPIQRRRPLRKNARDKNSKP) are disordered. Residues 20–31 (LNSQSVAKNPLN) are compositionally biased toward polar residues. The S5 DRBM domain occupies 57–120 (FEERVIAIHR…KDAQNRLVSV (64 aa)).

It belongs to the universal ribosomal protein uS5 family. As to quaternary structure, part of the 30S ribosomal subunit. Contacts proteins S4 and S8.

With S4 and S12 plays an important role in translational accuracy. In terms of biological role, located at the back of the 30S subunit body where it stabilizes the conformation of the head with respect to the body. The chain is Small ribosomal subunit protein uS5 from Mesomycoplasma hyopneumoniae (strain 7448) (Mycoplasma hyopneumoniae).